Consider the following 626-residue polypeptide: Glyco-Gag protein (626 aa).

The Cytoplasmic segment spans residues 1–67; sequence LGDVPGTSGA…VWSRSRAARP (67 aa). A helical transmembrane segment spans residues 68–86; sequence VCCSIVLCCFCLTVFLYLS. Over 87-626 the chain is Extracellular; that stretch reads ENMGQTATTP…PQASLLTLDD (540 aa). An N-linked (GlcNAc...) asparagine; by host glycan is attached at N113. 2 stretches are compositionally biased toward pro residues: residues 199–212 and 249–261; these read PSAP…PLST and DPPP…PPSP. The disordered stretch occupies residues 199 to 306; that stretch reads PSAPSLPPEP…STTSQAFPLR (108 aa). N480 carries an N-linked (GlcNAc...) asparagine; by host glycan. Composition is skewed to basic and acidic residues over residues 522–554 and 574–607; these read RETP…EKER and RQDR…DCPK. The disordered stretch occupies residues 522 to 626; it reads RETPEEREER…PQASLLTLDD (105 aa). The CCHC-type zinc finger occupies 590 to 607; it reads DQCAYCKEKGHWARDCPK.

In terms of processing, glycosylated by host. Cleaved by host near the middle of the molecule, releasing the c-terminal half containing capsid and nucleoprotein domains op GAG.

It is found in the host cell membrane. Plays a role in viral particle release. Presumably acts by facilitating the fission of the virion bud at the cell surface. May prevent the antiviral activity of murine APOBEC3. This chain is Glyco-Gag protein, found in Mus musculus (Mouse).